A 685-amino-acid chain; its full sequence is Keratin, type II cytoskeletal 2 epidermal (685 aa).

The tract at residues 1–20 is disordered; it reads MSCQISCKSRRGGGGGGGGG. A head region spans residues 1-196; sequence MSCQISCKSR…DPEIQNVKSQ (196 aa). R22 carries the post-translational modification Asymmetric dimethylarginine. A phosphoserine mark is found at S25 and S28. Residue R52 is modified to Omega-N-methylarginine. The residue at position 64 (S64) is a Phosphoserine. Positions 197 to 232 are coil 1A; it reads EREQIKTLNNKFASFIDTVRFLEQQNQVLHTKWELL. The IF rod domain occupies 197–511; it reads EREQIKTLNN…KLLEGEECRM (315 aa). Positions 233 to 251 are linker 1; that stretch reads QQLDVGTRTTNLDPVFQAY. The interval 252–343 is coil 1B; sequence IGILKKQVDR…TLYDTELSQL (92 aa). Residues 344 to 367 form a linker 12 region; it reads QQNVTDTNVILSMDNNRNLDLDSI. Positions 368-507 are coil 2; the sequence is IAEVQSQYEI…ATYRKLLEGE (140 aa). Residues 508–685 are tail; sequence ECRMSGDFSD…CGSGVTFSFR (178 aa). A disordered region spans residues 532-685; that stretch reads VASKAGFGSG…CGSGVTFSFR (154 aa). Residues 538 to 678 show a composition bias toward gly residues; it reads FGSGGQSSGG…GSGSGEGCGS (141 aa). Residues R554, R588, R603, and R653 each carry the omega-N-methylarginine modification.

This sequence belongs to the intermediate filament family. In terms of assembly, heterotetramer of two type I and two type II keratins. Associates with KRT10.

The protein localises to the cytoplasm. Probably contributes to terminal cornification. Associated with keratinocyte activation, proliferation and keratinization. Required for maintenance of corneocytes and keratin filaments in suprabasal keratinocytes in the epidermis of the ear, potentially via moderation of expression and localization of keratins and their partner proteins. Plays a role in the establishment of the epidermal barrier on plantar skin. This is Keratin, type II cytoskeletal 2 epidermal from Rattus norvegicus (Rat).